We begin with the raw amino-acid sequence, 104 residues long: L-rhamnose mutarotase (104 aa).

Tyr-18 is a binding site for substrate. The Proton donor role is filled by His-22. Residues Tyr-41 and 76–77 (WW) each bind substrate.

The protein belongs to the rhamnose mutarotase family. In terms of assembly, homodimer.

It localises to the cytoplasm. It catalyses the reaction alpha-L-rhamnose = beta-L-rhamnose. It functions in the pathway carbohydrate metabolism; L-rhamnose metabolism. Functionally, involved in the anomeric conversion of L-rhamnose. This Mannheimia succiniciproducens (strain KCTC 0769BP / MBEL55E) protein is L-rhamnose mutarotase.